A 254-amino-acid chain; its full sequence is Alcohol dehydrogenase (254 aa).

An NAD(+)-binding site is contributed by 10–33; it reads FVAGLGGIGLDTSREIVKSGPKNL. Serine 138 contributes to the substrate binding site. Tyrosine 151 serves as the catalytic Proton acceptor.

Belongs to the short-chain dehydrogenases/reductases (SDR) family. Homodimer.

The enzyme catalyses a primary alcohol + NAD(+) = an aldehyde + NADH + H(+). The catalysed reaction is a secondary alcohol + NAD(+) = a ketone + NADH + H(+). The protein is Alcohol dehydrogenase (Adh) of Drosophila planitibia (Fruit fly).